The following is a 369-amino-acid chain: Glutamate 5-kinase (369 aa).

Lys10 is an ATP binding site. The substrate site is built by Ser50, Asp137, and Asn149. ATP is bound by residues 169 to 170 and 210 to 216; these read TD and TGGMVTK. A PUA domain is found at 276-349; sequence EGSIFIDEGA…GKHSEEMLAT (74 aa).

The protein belongs to the glutamate 5-kinase family.

It localises to the cytoplasm. The enzyme catalyses L-glutamate + ATP = L-glutamyl 5-phosphate + ADP. It participates in amino-acid biosynthesis; L-proline biosynthesis; L-glutamate 5-semialdehyde from L-glutamate: step 1/2. Its function is as follows. Catalyzes the transfer of a phosphate group to glutamate to form L-glutamate 5-phosphate. The chain is Glutamate 5-kinase from Desulfitobacterium hafniense (strain Y51).